A 275-amino-acid chain; its full sequence is NH(3)-dependent NAD(+) synthetase (275 aa).

50–57 is a binding site for ATP; that stretch reads GISGGVDS. D56 is a Mg(2+) binding site. R147 contributes to the deamido-NAD(+) binding site. An ATP-binding site is contributed by T167. E172 contacts Mg(2+). 2 residues coordinate deamido-NAD(+): K180 and D187. 2 residues coordinate ATP: K196 and T218. 267-268 serves as a coordination point for deamido-NAD(+); the sequence is HK.

Belongs to the NAD synthetase family. Homodimer.

It catalyses the reaction deamido-NAD(+) + NH4(+) + ATP = AMP + diphosphate + NAD(+) + H(+). The protein operates within cofactor biosynthesis; NAD(+) biosynthesis; NAD(+) from deamido-NAD(+) (ammonia route): step 1/1. In terms of biological role, catalyzes the ATP-dependent amidation of deamido-NAD to form NAD. Uses ammonia as a nitrogen source. The polypeptide is NH(3)-dependent NAD(+) synthetase (Pseudomonas aeruginosa (strain UCBPP-PA14)).